Reading from the N-terminus, the 441-residue chain is Peroxisome proliferator-activated receptor delta (441 aa).

A compositionally biased stretch (acidic residues) spans 1–22 (MEQPQEEAPEVREEEEKEEVAE). The segment at 1-54 (MEQPQEEAPEVREEEEKEEVAEAEGAPELNGGPQHALPSSSYTDLSRSSSPPSL) is disordered. Residues 37 to 54 (LPSSSYTDLSRSSSPPSL) are compositionally biased toward low complexity. The nuclear receptor DNA-binding region spans 71-145 (NMECRVCGDK…LGMSHNAIRF (75 aa)). 2 consecutive NR C4-type zinc fingers follow at residues 74-94 (CRVCGDKASGFHYGVHACEGC) and 111-133 (CERSCKIQKKNRNKCQYCRFQKC). One can recognise an NR LBD domain in the interval 211-439 (FVIHDIETLW…HPLLQEIYKD (229 aa)).

This sequence belongs to the nuclear hormone receptor family. NR1 subfamily. Heterodimer with the retinoid X receptor. Interacts (via domain NR LBD) with CRY1 and CRY2 in a ligand-dependent manner. 'Lys-48'-linked polyubiquitinated; leading to proteasomal degradation. Deubiquitinated and stabilized by OTUD3. Ubiquitous with maximal levels in placenta and skeletal muscle.

Its subcellular location is the nucleus. Its function is as follows. Ligand-activated transcription factor key mediator of energy metabolism in adipose tissues. Receptor that binds peroxisome proliferators such as hypolipidemic drugs and fatty acids. Has a preference for poly-unsaturated fatty acids, such as gamma-linoleic acid and eicosapentanoic acid. Once activated by a ligand, the receptor binds to promoter elements of target genes. Regulates the peroxisomal beta-oxidation pathway of fatty acids. Functions as transcription activator for the acyl-CoA oxidase gene. Decreases expression of NPC1L1 once activated by a ligand. This chain is Peroxisome proliferator-activated receptor delta, found in Homo sapiens (Human).